We begin with the raw amino-acid sequence, 377 residues long: Alanine racemase (377 aa).

Lys37 (proton acceptor; specific for D-alanine) is an active-site residue. Lys37 carries the post-translational modification N6-(pyridoxal phosphate)lysine. Substrate is bound at residue Arg135. Tyr271 acts as the Proton acceptor; specific for L-alanine in catalysis. Residue Met319 participates in substrate binding.

Belongs to the alanine racemase family. Pyridoxal 5'-phosphate is required as a cofactor.

The enzyme catalyses L-alanine = D-alanine. The protein operates within amino-acid biosynthesis; D-alanine biosynthesis; D-alanine from L-alanine: step 1/1. In terms of biological role, catalyzes the interconversion of L-alanine and D-alanine. May also act on other amino acids. This is Alanine racemase (alr) from Helicobacter pylori (strain P12).